The primary structure comprises 199 residues: Recombination protein RecR (199 aa).

A C4-type zinc finger spans residues 58 to 73 (CKTCGNIDTQSPCTVC). Residues 81–176 (AMIVVVADVA…KVTRLAHGVP (96 aa)) enclose the Toprim domain.

This sequence belongs to the RecR family.

May play a role in DNA repair. It seems to be involved in an RecBC-independent recombinational process of DNA repair. It may act with RecF and RecO. The polypeptide is Recombination protein RecR (Bradyrhizobium sp. (strain ORS 278)).